An 82-amino-acid polypeptide reads, in one-letter code: Small ribosomal subunit protein bS16 (82 aa).

It belongs to the bacterial ribosomal protein bS16 family.

The protein is Small ribosomal subunit protein bS16 of Cyanothece sp. (strain PCC 7425 / ATCC 29141).